We begin with the raw amino-acid sequence, 289 residues long: uncharacterized protein (289 aa).

Transmembrane regions (helical) follow at residues 4-24 (NLLA…GTVV), 44-64 (LNAL…LAYF), 68-88 (VALG…SLMF), 106-126 (IFWA…GRPL), 138-158 (IPVL…AEYV), 166-186 (ILGL…KAAV), 196-216 (GLIL…GTIV), 230-250 (LPAM…LVLG), and 258-278 (WEWI…IALS).

The protein resides in the cell membrane. This is an uncharacterized protein from Corynebacterium glutamicum (strain ATCC 13032 / DSM 20300 / JCM 1318 / BCRC 11384 / CCUG 27702 / LMG 3730 / NBRC 12168 / NCIMB 10025 / NRRL B-2784 / 534).